Consider the following 647-residue polypeptide: Threonine--tRNA ligase (647 aa).

Positions 1–61 (MINITFPDGA…TEDGSIEIVT (61 aa)) constitute a TGS domain. Residues 242-540 (DHRKLGKELD…LIENYKGAFP (299 aa)) are catalytic. Residues Cys336, His387, and His517 each contribute to the Zn(2+) site.

This sequence belongs to the class-II aminoacyl-tRNA synthetase family. Homodimer. Requires Zn(2+) as cofactor.

It localises to the cytoplasm. It catalyses the reaction tRNA(Thr) + L-threonine + ATP = L-threonyl-tRNA(Thr) + AMP + diphosphate + H(+). Catalyzes the attachment of threonine to tRNA(Thr) in a two-step reaction: L-threonine is first activated by ATP to form Thr-AMP and then transferred to the acceptor end of tRNA(Thr). Also edits incorrectly charged L-seryl-tRNA(Thr). This is Threonine--tRNA ligase from Streptococcus pneumoniae (strain P1031).